The following is a 335-amino-acid chain: tRNA N6-adenosine threonylcarbamoyltransferase (335 aa).

Positions 109, 113, and 130 each coordinate a divalent metal cation. Substrate is bound by residues 130 to 134, Asp-162, Gly-177, Glu-181, and Asn-266; that span reads YVSGG. Residue Asp-294 participates in a divalent metal cation binding.

This sequence belongs to the KAE1 / TsaD family. As to quaternary structure, component of the EKC/KEOPS complex composed of at least GON7, TP53RK, TPRKB, OSGEP and LAGE3; the whole complex dimerizes. A divalent metal cation serves as cofactor. As to expression, widely expressed at low level. Expressed at intermediate level in lung. Weakly expressed in testis, skeletal muscle, kidney, liver, spleen, brain and heart.

The protein resides in the cytoplasm. It is found in the nucleus. The catalysed reaction is L-threonylcarbamoyladenylate + adenosine(37) in tRNA = N(6)-L-threonylcarbamoyladenosine(37) in tRNA + AMP + H(+). Component of the EKC/KEOPS complex that is required for the formation of a threonylcarbamoyl group on adenosine at position 37 (t(6)A37) in tRNAs that read codons beginning with adenine. The complex is probably involved in the transfer of the threonylcarbamoyl moiety of threonylcarbamoyl-AMP (TC-AMP) to the N6 group of A37. OSGEP likely plays a direct catalytic role in this reaction, but requires other protein(s) of the complex to fulfill this activity. This is tRNA N6-adenosine threonylcarbamoyltransferase (Osgep) from Mus musculus (Mouse).